The chain runs to 838 residues: Translation initiation factor IF-2 (838 aa).

2 disordered regions span residues Pro30–Glu60 and Gln94–Pro254. Basic and acidic residues-rich tracts occupy residues Ala33 to Lys43 and Ser96 to Arg136. The span at Gln137–Ala173 shows a compositional bias: low complexity. 2 stretches are compositionally biased toward basic and acidic residues: residues Asp174 to Pro214 and Thr222 to Arg231. The segment covering Arg232–Ala245 has biased composition (basic residues). Residues Ala338–Lys507 form the tr-type G domain. A G1 region spans residues Gly347–Thr354. Gly347–Thr354 serves as a coordination point for GTP. A G2 region spans residues Gly372–His376. Positions Asp393–Gly396 are G3. Residues Asp393–His397 and Asn447–Asp450 contribute to the GTP site. The tract at residues Asn447–Asp450 is G4. Positions Ser483–Lys485 are G5.

It belongs to the TRAFAC class translation factor GTPase superfamily. Classic translation factor GTPase family. IF-2 subfamily.

The protein localises to the cytoplasm. In terms of biological role, one of the essential components for the initiation of protein synthesis. Protects formylmethionyl-tRNA from spontaneous hydrolysis and promotes its binding to the 30S ribosomal subunits. Also involved in the hydrolysis of GTP during the formation of the 70S ribosomal complex. In Pseudomonas fluorescens (strain ATCC BAA-477 / NRRL B-23932 / Pf-5), this protein is Translation initiation factor IF-2.